A 219-amino-acid chain; its full sequence is Phosphate-specific transport system accessory protein PhoU homolog 1 (219 aa).

Belongs to the PhoU family. In terms of assembly, homodimer.

Its subcellular location is the cytoplasm. Functionally, plays a role in the regulation of phosphate uptake. The chain is Phosphate-specific transport system accessory protein PhoU homolog 1 from Methanothermobacter thermautotrophicus (strain ATCC 29096 / DSM 1053 / JCM 10044 / NBRC 100330 / Delta H) (Methanobacterium thermoautotrophicum).